Here is a 270-residue protein sequence, read N- to C-terminus: Mlc titration factor A (270 aa).

The Zn(2+) site is built by His111, His148, His152, and Glu211.

It belongs to the MtfA family. In terms of assembly, interacts with Mlc. Zn(2+) is required as a cofactor.

The protein localises to the cytoplasm. In terms of biological role, involved in the modulation of the activity of the glucose-phosphotransferase system (glucose-PTS). Interacts with the transcriptional repressor Mlc, preventing its interaction with DNA and leading to the modulation of expression of genes regulated by Mlc, including ptsG, which encodes the PTS system glucose-specific EIICB component. Functionally, shows zinc-dependent metallopeptidase activity. The chain is Mlc titration factor A from Yersinia pestis bv. Antiqua (strain Nepal516).